Reading from the N-terminus, the 355-residue chain is dTDP-D-glucose 4,6-dehydratase (355 aa).

T142 lines the substrate pocket. Residue D143 is the Proton donor of the active site. Residues E144 and Y166 each act as proton acceptor in the active site.

Belongs to the NAD(P)-dependent epimerase/dehydratase family. dTDP-glucose dehydratase subfamily. It depends on NAD(+) as a cofactor.

It carries out the reaction dTDP-alpha-D-glucose = dTDP-4-dehydro-6-deoxy-alpha-D-glucose + H2O. This chain is dTDP-D-glucose 4,6-dehydratase (Tgds), found in Mus musculus (Mouse).